Reading from the N-terminus, the 354-residue chain is Protein RecA (354 aa).

67-74 (GPESSGKT) contributes to the ATP binding site.

This sequence belongs to the RecA family.

Its subcellular location is the cytoplasm. In terms of biological role, can catalyze the hydrolysis of ATP in the presence of single-stranded DNA, the ATP-dependent uptake of single-stranded DNA by duplex DNA, and the ATP-dependent hybridization of homologous single-stranded DNAs. It interacts with LexA causing its activation and leading to its autocatalytic cleavage. In Hamiltonella defensa subsp. Acyrthosiphon pisum (strain 5AT), this protein is Protein RecA.